The sequence spans 192 residues: MVVNVVIVAKKYFLFITLLIIQVSLPAHAGTDEKGWFNTFTDNVAETWREPEHYDLYIPAITWHARFAYDKRKTDRYNERPWGGGFGQSRWDEKGNWHGLYVMAFKDSWNKWEPIGGYGWESTWRPLPDDNFHLGLGFTAGVTARDNWKYIPVPVLLPLASIGYGPATFQMTYIPGTYNNGNVYFAWMRFQF.

A signal peptide spans 1 to 29 (MVVNVVIVAKKYFLFITLLIIQVSLPAHA). Residues H64, D107, and S108 contribute to the active site.

Belongs to the lipid A palmitoyltransferase family. In terms of assembly, homodimer.

The protein resides in the cell outer membrane. The enzyme catalyses a lipid A + a 1,2-diacyl-sn-glycero-3-phosphocholine = a hepta-acyl lipid A + a 2-acyl-sn-glycero-3-phosphocholine. It carries out the reaction a lipid IVA + a 1,2-diacyl-sn-glycero-3-phosphocholine = a lipid IVB + a 2-acyl-sn-glycero-3-phosphocholine. It catalyses the reaction a lipid IIA + a 1,2-diacyl-sn-glycero-3-phosphocholine = a lipid IIB + a 2-acyl-sn-glycero-3-phosphocholine. Functionally, transfers a fatty acid residue from the sn-1 position of a phospholipid to the N-linked hydroxyfatty acid chain on the proximal unit of lipid A or its precursors. In Citrobacter rodentium (strain ICC168) (Citrobacter freundii biotype 4280), this protein is Lipid A acyltransferase PagP.